The following is a 356-amino-acid chain: Protein RecA (356 aa).

68 to 75 (GPESSGKT) contacts ATP.

It belongs to the RecA family.

The protein resides in the cytoplasm. Its function is as follows. Can catalyze the hydrolysis of ATP in the presence of single-stranded DNA, the ATP-dependent uptake of single-stranded DNA by duplex DNA, and the ATP-dependent hybridization of homologous single-stranded DNAs. It interacts with LexA causing its activation and leading to its autocatalytic cleavage. This Clostridium botulinum (strain Alaska E43 / Type E3) protein is Protein RecA.